Here is a 330-residue protein sequence, read N- to C-terminus: MKTAYIAKQRQISFVKSHFSRQLEECLGLIEVQAPILSRVGDGTQDNLSGCEKAVQVKVKALPDAQFEVVHSLAKWKRQTLGQHDFSAGEGLYTHMKALRPDEDRLSPLHSVYVDQWDWERVMGDGERQFSTLKSTVEAIWAGIKATEAAVSEEFGLAPFLPDQIHFVHSQELLSRYPDLDAKGRERAIAKDLGAVFLVGIGGKLSDGHRHDVRAPDYDDWSTPSELGHAGLNGDILVWNPVLEDAFELSSMGIRVDADTLKHQLALTGDEDRLQLEWHQALLRGEMPQTIGGGIGQSRLTMLLLQLPHIGQVQCGVWPAAVRESVPSLL.

This sequence belongs to the class-II aminoacyl-tRNA synthetase family. AsnA subfamily.

Its subcellular location is the cytoplasm. The catalysed reaction is L-aspartate + NH4(+) + ATP = L-asparagine + AMP + diphosphate + H(+). It functions in the pathway amino-acid biosynthesis; L-asparagine biosynthesis; L-asparagine from L-aspartate (ammonia route): step 1/1. The sequence is that of Aspartate--ammonia ligase from Shigella boydii serotype 18 (strain CDC 3083-94 / BS512).